Consider the following 219-residue polypeptide: uncharacterized protein (219 aa).

The 78-residue stretch at 30–107 folds into the RRM domain; sequence FRLFVGNLGN…RPVKLSRATS (78 aa). Positions 140 to 149 are enriched in basic residues; it reads KKIKNKHGKN. The tract at residues 140–219 is disordered; it reads KKIKNKHGKN…YSRASSFRRV (80 aa). Over residues 150–169 the composition is skewed to low complexity; the sequence is SSKSSRAAQSAAAELISSSS. The span at 176–186 shows a compositional bias: polar residues; the sequence is ANSTSVPNAVN.

This is an uncharacterized protein from Schizosaccharomyces pombe (strain 972 / ATCC 24843) (Fission yeast).